Here is a 386-residue protein sequence, read N- to C-terminus: Patatin-07 (386 aa).

The N-terminal stretch at 1-23 (MATTKSFLILFFMILATTSSTCA) is a signal peptide. The region spanning 32-229 (LSIDGGGIKG…TVADPALLSV (198 aa)) is the PNPLA domain. Positions 36–41 (GGGIKG) match the GXGXXG motif. A GXSXG motif is present at residues 75-79 (GTSTG). The active-site Nucleophile is the Ser77. 2 N-linked (GlcNAc...) asparagine glycosylation sites follow: Asn115 and Asn202. The active-site Proton acceptor is the Asp215. Positions 215-217 (DGA) match the DGA/G motif.

Belongs to the patatin family. As to expression, tuber.

It is found in the vacuole. Its function is as follows. Probable lipolytic acyl hydrolase (LAH), an activity which is thought to be involved in the response of tubers to pathogens. This Solanum tuberosum (Potato) protein is Patatin-07.